Consider the following 235-residue polypeptide: Proteasome subunit alpha type-2 (235 aa).

Belongs to the peptidase T1A family. In terms of assembly, the 26S proteasome consists of a 20S proteasome core and two 19S regulatory subunits. The 20S proteasome core is composed of 28 subunits that are arranged in four stacked rings, resulting in a barrel-shaped structure. The two end rings are each formed by seven alpha subunits, and the two central rings are each formed by seven beta subunits. The catalytic chamber with the active sites is on the inside of the barrel.

Its subcellular location is the cytoplasm. The protein resides in the nucleus. In terms of biological role, the proteasome is a multicatalytic proteinase complex which is characterized by its ability to cleave peptides with Arg, Phe, Tyr, Leu, and Glu adjacent to the leaving group at neutral or slightly basic pH. The proteasome has an ATP-dependent proteolytic activity. The sequence is that of Proteasome subunit alpha type-2 (PAB1) from Oryza sativa subsp. indica (Rice).